The following is a 226-amino-acid chain: Urease accessory protein UreE (226 aa).

The interval 192-226 (PHGSGLHIHSIHSHGDGHSHDHDHSHGDHDSDHKH) is disordered. The span at 204–226 (SHGDGHSHDHDHSHGDHDSDHKH) shows a compositional bias: basic and acidic residues.

It belongs to the UreE family.

Its subcellular location is the cytoplasm. In terms of biological role, involved in urease metallocenter assembly. Binds nickel. Probably functions as a nickel donor during metallocenter assembly. The chain is Urease accessory protein UreE from Yersinia intermedia.